Consider the following 380-residue polypeptide: Cytochrome b (380 aa).

4 helical membrane-spanning segments follow: residues 34 to 54 (FGSL…ILAM), 78 to 100 (WLMR…AHMG), 113 to 133 (TWNI…MGYV), and 179 to 199 (FFAF…VHLL). Heme b-binding residues include histidine 84 and histidine 98. Heme b contacts are provided by histidine 183 and histidine 197. Residue histidine 202 coordinates a ubiquinone. The next 4 helical transmembrane spans lie at 225–245 (FSWK…TITL), 289–309 (LGGV…MLTH), 324–344 (VIFW…AAPV), and 349–369 (ITLG…APMI).

Belongs to the cytochrome b family. As to quaternary structure, the main subunits of complex b-c1 are: cytochrome b, cytochrome c1 and the Rieske protein. Heme b is required as a cofactor.

Its subcellular location is the mitochondrion inner membrane. Component of the ubiquinol-cytochrome c reductase complex (complex III or cytochrome b-c1 complex) that is part of the mitochondrial respiratory chain. The b-c1 complex mediates electron transfer from ubiquinol to cytochrome c. Contributes to the generation of a proton gradient across the mitochondrial membrane that is then used for ATP synthesis. This chain is Cytochrome b (mt:Cyt-b), found in Xenoturbella bocki (Marine worm).